A 1047-amino-acid chain; its full sequence is Carbamoyl phosphate synthase large chain (1047 aa).

The tract at residues 1–398 (MPRRDDIHRI…ALMKAIASLD (398 aa)) is carboxyphosphate synthetic domain. ATP-binding residues include Arg129, Arg169, Gly175, Gly176, Glu208, Leu210, Glu215, Gly241, Val242, His243, Gln284, and Glu296. The region spanning 133 to 325 (YEFLKAMGEP…IARIAAKIAA (193 aa)) is the ATP-grasp 1 domain. The Mg(2+) site is built by Gln284, Glu296, and Asn298. Residues Gln284, Glu296, and Asn298 each coordinate Mn(2+). The interval 399-539 (NAFSSNIRLH…YSTYEDEDET (141 aa)) is oligomerization domain. Residues 540–916 (PDLSGSIMII…ALRKSLQRSI (377 aa)) form a carbamoyl phosphate synthetic domain region. Residues 665–854 (SRVIEGLGIK…WVRLAVECMI (190 aa)) enclose the ATP-grasp 2 domain. The ATP site is built by Arg701, Lys738, Leu740, Glu745, Gly770, Val771, His772, Ser773, Gln813, and Glu825. Positions 813, 825, and 827 each coordinate Mg(2+). 3 residues coordinate Mn(2+): Gln813, Glu825, and Asn827. In terms of domain architecture, MGS-like spans 910–1047 (KSLQRSISSV…REIGDYLQVS (138 aa)). The interval 916–1047 (ISSVLITVRD…REIGDYLQVS (132 aa)) is allosteric domain.

The protein belongs to the CarB family. As to quaternary structure, composed of two chains; the small (or glutamine) chain promotes the hydrolysis of glutamine to ammonia, which is used by the large (or ammonia) chain to synthesize carbamoyl phosphate. Tetramer of heterodimers (alpha,beta)4. The cofactor is Mg(2+). It depends on Mn(2+) as a cofactor.

It carries out the reaction hydrogencarbonate + L-glutamine + 2 ATP + H2O = carbamoyl phosphate + L-glutamate + 2 ADP + phosphate + 2 H(+). The catalysed reaction is hydrogencarbonate + NH4(+) + 2 ATP = carbamoyl phosphate + 2 ADP + phosphate + 2 H(+). It participates in amino-acid biosynthesis; L-arginine biosynthesis; carbamoyl phosphate from bicarbonate: step 1/1. It functions in the pathway pyrimidine metabolism; UMP biosynthesis via de novo pathway; (S)-dihydroorotate from bicarbonate: step 1/3. In terms of biological role, large subunit of the glutamine-dependent carbamoyl phosphate synthetase (CPSase). CPSase catalyzes the formation of carbamoyl phosphate from the ammonia moiety of glutamine, carbonate, and phosphate donated by ATP, constituting the first step of 2 biosynthetic pathways, one leading to arginine and/or urea and the other to pyrimidine nucleotides. The large subunit (synthetase) binds the substrates ammonia (free or transferred from glutamine from the small subunit), hydrogencarbonate and ATP and carries out an ATP-coupled ligase reaction, activating hydrogencarbonate by forming carboxy phosphate which reacts with ammonia to form carbamoyl phosphate. This is Carbamoyl phosphate synthase large chain from Thermoplasma acidophilum (strain ATCC 25905 / DSM 1728 / JCM 9062 / NBRC 15155 / AMRC-C165).